The primary structure comprises 451 residues: Inositol-pentakisphosphate 2-kinase (451 aa).

Methionine 1 is subject to N-acetylmethionine. ATP is bound by residues 19–22 (GGAN) and arginine 40. Positions 45 and 130 each coordinate substrate. Residues 147–149 (NDH) and 166–168 (EIK) each bind ATP. An EXKPK motif motif is present at residues 166–170 (EIKPK). 3 residues coordinate substrate: lysine 170, lysine 200, and asparagine 238. Arginine 241 provides a ligand contact to ATP. Zn(2+)-binding residues include histidine 320, cysteine 330, cysteine 333, and histidine 346. Residue aspartate 368 participates in substrate binding. Aspartate 407 is an ATP binding site. Substrate is bound by residues lysine 411, arginine 415, and tyrosine 419.

It belongs to the IPK1 type 2 family. Requires Zn(2+) as cofactor. As to expression, strongly expressed in leaves and cauline leaves. Weakly expressed in siliques and flowers. In flower, it is expressed in the major organs of developing flower buds. Strongly expressed in sepals, petals, in the male and female organs of immature and mature flower buds. Strongly expressed in the gynoecium and carpels which are fused to form the gynoecium. Also expressed in the transmitting tissue and ovules.

It carries out the reaction 1D-myo-inositol 1,3,4,5,6-pentakisphosphate + ATP = 1D-myo-inositol hexakisphosphate + ADP + H(+). Its function is as follows. Phosphorylates Ins(1,3,4,5,6)P5 at position 2 to form Ins(1,2,3,4,5,6)P6 (InsP6 or phytate). Phytate is a regulator of intracellular signaling, a highly abundant animal antinutrient, and a phosphate store in plant seeds. Also phosphorylates Ins(1,3,4,6)P4 and Ins(1,4,5,6)P4 to produce Ins(1,2,3,4,6)P5 and Ins(1,2,4,5,6)P5. The protein is Inositol-pentakisphosphate 2-kinase (IPK1) of Arabidopsis thaliana (Mouse-ear cress).